The sequence spans 323 residues: tRNA U34 carboxymethyltransferase (323 aa).

Residues K91, W105, K110, G130, 180–181, M196, Y200, and R315 contribute to the carboxy-S-adenosyl-L-methionine site; that span reads IE.

The protein belongs to the class I-like SAM-binding methyltransferase superfamily. CmoB family. In terms of assembly, homotetramer.

It carries out the reaction carboxy-S-adenosyl-L-methionine + 5-hydroxyuridine(34) in tRNA = 5-carboxymethoxyuridine(34) in tRNA + S-adenosyl-L-homocysteine + H(+). Functionally, catalyzes carboxymethyl transfer from carboxy-S-adenosyl-L-methionine (Cx-SAM) to 5-hydroxyuridine (ho5U) to form 5-carboxymethoxyuridine (cmo5U) at position 34 in tRNAs. The sequence is that of tRNA U34 carboxymethyltransferase from Citrifermentans bemidjiense (strain ATCC BAA-1014 / DSM 16622 / JCM 12645 / Bem) (Geobacter bemidjiensis).